Reading from the N-terminus, the 131-residue chain is Large ribosomal subunit protein bL19 (131 aa).

This sequence belongs to the bacterial ribosomal protein bL19 family.

This protein is located at the 30S-50S ribosomal subunit interface and may play a role in the structure and function of the aminoacyl-tRNA binding site. This is Large ribosomal subunit protein bL19 from Rhodopseudomonas palustris (strain BisB18).